A 556-amino-acid chain; its full sequence is MFVFRVLNTVPYTNRTGAKDLVASIHSFLTSNLLVGLAVLISWKQFGGTPIECMVPLDFTSAWVQYSNNYCWAQPTYFIPFTEELVEQVVDPADVVADGITIGNGGNRPRFVKKGGEKISYYQWMSFFLLFEAACFRLPCFIWKYFASQSGMQVGEILRVASDENNAVPLVKKANIDALCIHLRGVLRFQKRLKLKKIVPHKILRFLNIKYSAYYVTFIYFVAKVAFLLNVILQSKLLNKYMLPHDRQQNFGFDMWKTIFYGSTNGNETWRENGVFPRVTLCDFETRDMGNVQMHTVQCVLLLNLFTEKIFVFLWAWYILLTAFTVGNLFSWLFAVFNETYNEHFILNHLEMCETPFDKDDLKNREHVTRFITLYLGTDGLFLLQLIAQHADVVFTTELIAALFKTYIEIEAQRATLKQMNAVLPLLRPNDESQVESGKNTAPSTSHNVRRRGTEQLEKNVKSRQGSLSTQLRPFNSFEEPDQPTKKFDDSSSEDENSKKGSKKPSPTKKKASSKNSPQSSSNSRRPSLAHTASPAFTHHHEPDSKIPKTAEKKHW.

3 consecutive transmembrane segments (helical) span residues 21-41, 127-147, and 213-233; these read LVAS…AVLI, FFLL…KYFA, and AYYV…NVIL. Asn267 is a glycosylation site (N-linked (GlcNAc...) asparagine). The chain crosses the membrane as a helical span at residues 310–330; that stretch reads IFVFLWAWYILLTAFTVGNLF. Residues 431 to 556 form a disordered region; it reads DESQVESGKN…IPKTAEKKHW (126 aa). Positions 435-447 are enriched in polar residues; sequence VESGKNTAPSTSH. A compositionally biased stretch (basic and acidic residues) spans 452–461; it reads RGTEQLEKNV. The segment covering 463 to 474 has biased composition (polar residues); sequence SRQGSLSTQLRP. Positions 500-513 are enriched in basic residues; sequence KGSKKPSPTKKKAS. Positions 514–527 are enriched in low complexity; the sequence is SKNSPQSSSNSRRP. Basic and acidic residues predominate over residues 539 to 556; sequence HHHEPDSKIPKTAEKKHW.

Belongs to the pannexin family.

It is found in the cell membrane. Its subcellular location is the cell junction. The protein resides in the gap junction. Its function is as follows. Structural component of the gap junctions. The chain is Innexin-7 (inx-7) from Caenorhabditis elegans.